A 435-amino-acid polypeptide reads, in one-letter code: GTPase Obg (435 aa).

Residues 6 to 164 (ADFVDRVKIF…RWLELELKIL (159 aa)) form the Obg domain. One can recognise an OBG-type G domain in the interval 165 to 335 (ADVGLVGYPN…LVSKLASIVR (171 aa)). Residues 171-178 (GYPNVGKS), 196-200 (FTTLI), 217-220 (DIPG), 287-290 (NKID), and 316-318 (SAV) each bind GTP. Residues Ser-178 and Thr-198 each contribute to the Mg(2+) site. The OCT domain occupies 357-435 (RRLPEKFHLE…IGDFEFEYRE (79 aa)).

This sequence belongs to the TRAFAC class OBG-HflX-like GTPase superfamily. OBG GTPase family. As to quaternary structure, monomer. Requires Mg(2+) as cofactor.

Its subcellular location is the cytoplasm. Its function is as follows. An essential GTPase which binds GTP, GDP and possibly (p)ppGpp with moderate affinity, with high nucleotide exchange rates and a fairly low GTP hydrolysis rate. Plays a role in control of the cell cycle, stress response, ribosome biogenesis and in those bacteria that undergo differentiation, in morphogenesis control. The sequence is that of GTPase Obg from Thermotoga maritima (strain ATCC 43589 / DSM 3109 / JCM 10099 / NBRC 100826 / MSB8).